The following is a 235-amino-acid chain: MSNHSPNPEIIRNMFSKVAANYDKGNNVLSMGIHHLWRKKLVKYSGAKAGDQVLDCATGTGDLAIEFKKTVGTGAVTGTDFCAEMLIPAPGKAKERGLDITFEQADVTQLQYADNSFDVCSISFGIRNVGDPVKALKEMARVTRPGGKVMVLEFGQVNIPVFGALYNFYSQNILPKIGGIVTGQKEAYEYLQKSSAAFPCREGFLDLMKESGAYSKMEYITLTGGIAYIYKGTVK.

Residues T60, D80, 106–107 (DV), and S123 contribute to the S-adenosyl-L-methionine site.

The protein belongs to the class I-like SAM-binding methyltransferase superfamily. MenG/UbiE family.

It carries out the reaction a 2-demethylmenaquinol + S-adenosyl-L-methionine = a menaquinol + S-adenosyl-L-homocysteine + H(+). The enzyme catalyses a 2-methoxy-6-(all-trans-polyprenyl)benzene-1,4-diol + S-adenosyl-L-methionine = a 5-methoxy-2-methyl-3-(all-trans-polyprenyl)benzene-1,4-diol + S-adenosyl-L-homocysteine + H(+). It functions in the pathway quinol/quinone metabolism; menaquinone biosynthesis; menaquinol from 1,4-dihydroxy-2-naphthoate: step 2/2. The protein operates within cofactor biosynthesis; ubiquinone biosynthesis. In terms of biological role, methyltransferase required for the conversion of demethylmenaquinol (DMKH2) to menaquinol (MKH2) and the conversion of 2-polyprenyl-6-methoxy-1,4-benzoquinol (DDMQH2) to 2-polyprenyl-3-methyl-6-methoxy-1,4-benzoquinol (DMQH2). The polypeptide is Ubiquinone/menaquinone biosynthesis C-methyltransferase UbiE (Bdellovibrio bacteriovorus (strain ATCC 15356 / DSM 50701 / NCIMB 9529 / HD100)).